The primary structure comprises 347 residues: MAYYKGAASEGGRAMQLMKKREIAQQEIEFRKKKIEEDLKVSNIESKFATHYDAVEQQLKTSTIGLVTLDEMKQKQEDIVREREKKLAQKKEEKDREKLKALEAKQAEKDRQRKQIQALSFNPEEDEESFDDEDEEEPLEIKPHKWQTEECTEPRIKKIKKNPDVDTSFLPDREREEMDNKLREELRQEWAMKQATLKDQEIPITFSYWDGSGHRKCVTMKKGNSIYQFLQKCLEMLRKEFSELKTVMADQLMYVKEDLILPHHYTFYDFIVTKARGKSGPLFSFDVKDDIRMISDASVEKEETHAGKVLLRSWYERNKHIFPASRWEPYDPTKVYDKYTIKDKCKK.

Residues 77 to 113 (EDIVREREKKLAQKKEEKDREKLKALEAKQAEKDRQR) are compositionally biased toward basic and acidic residues. The disordered stretch occupies residues 77 to 142 (EDIVREREKK…EDEEEPLEIK (66 aa)). Acidic residues predominate over residues 123–138 (PEEDEESFDDEDEEEP).

The protein belongs to the FAM50 family.

In Aedes aegypti (Yellowfever mosquito), this protein is Protein FAM50 homolog.